The primary structure comprises 529 residues: Meiosis 1 arrest protein (529 aa).

Disordered regions lie at residues Lys180 to Ser201 and Ala504 to Thr529. The segment covering Ser188 to Ser200 has biased composition (polar residues). The residue at position 516 (Ser516) is a Phosphoserine.

Expressed in germ cells of the testis. Expressed from spermatogonia to spermatids. Expressed at very low levels in lung, stomach, thymus. Not detected in Sertoli cells.

Its subcellular location is the cytoplasm. Required for meiosis I progression during spermatogenesis. The sequence is that of Meiosis 1 arrest protein (M1ap) from Mus musculus (Mouse).